Reading from the N-terminus, the 456-residue chain is Bifunctional protein GlmU (456 aa).

Residues 1–229 are pyrophosphorylase; sequence MLNNAMSVVI…LSEVEGVNNR (229 aa). Residues 11 to 14, Lys-25, Gln-76, 81 to 82, 103 to 105, Gly-140, Glu-154, Asn-169, and Asn-227 contribute to the UDP-N-acetyl-alpha-D-glucosamine site; these read LAAG, GT, and YGD. Asp-105 serves as a coordination point for Mg(2+). Asn-227 serves as a coordination point for Mg(2+). The interval 230-250 is linker; that stretch reads LQLSRLERVYQSEQAEKLLLA. The interval 251 to 456 is N-acetyltransferase; sequence GVMLRDPARF…EGWRRPVKKK (206 aa). UDP-N-acetyl-alpha-D-glucosamine contacts are provided by Arg-333 and Lys-351. The Proton acceptor role is filled by His-363. 2 residues coordinate UDP-N-acetyl-alpha-D-glucosamine: Tyr-366 and Asn-377. Acetyl-CoA contacts are provided by residues Ala-380, 386–387, Ser-405, Ala-423, and Arg-440; that span reads NY.

This sequence in the N-terminal section; belongs to the N-acetylglucosamine-1-phosphate uridyltransferase family. It in the C-terminal section; belongs to the transferase hexapeptide repeat family. As to quaternary structure, homotrimer. It depends on Mg(2+) as a cofactor.

Its subcellular location is the cytoplasm. The catalysed reaction is alpha-D-glucosamine 1-phosphate + acetyl-CoA = N-acetyl-alpha-D-glucosamine 1-phosphate + CoA + H(+). It catalyses the reaction N-acetyl-alpha-D-glucosamine 1-phosphate + UTP + H(+) = UDP-N-acetyl-alpha-D-glucosamine + diphosphate. Its pathway is nucleotide-sugar biosynthesis; UDP-N-acetyl-alpha-D-glucosamine biosynthesis; N-acetyl-alpha-D-glucosamine 1-phosphate from alpha-D-glucosamine 6-phosphate (route II): step 2/2. It participates in nucleotide-sugar biosynthesis; UDP-N-acetyl-alpha-D-glucosamine biosynthesis; UDP-N-acetyl-alpha-D-glucosamine from N-acetyl-alpha-D-glucosamine 1-phosphate: step 1/1. The protein operates within bacterial outer membrane biogenesis; LPS lipid A biosynthesis. Functionally, catalyzes the last two sequential reactions in the de novo biosynthetic pathway for UDP-N-acetylglucosamine (UDP-GlcNAc). The C-terminal domain catalyzes the transfer of acetyl group from acetyl coenzyme A to glucosamine-1-phosphate (GlcN-1-P) to produce N-acetylglucosamine-1-phosphate (GlcNAc-1-P), which is converted into UDP-GlcNAc by the transfer of uridine 5-monophosphate (from uridine 5-triphosphate), a reaction catalyzed by the N-terminal domain. The sequence is that of Bifunctional protein GlmU from Shigella dysenteriae serotype 1 (strain Sd197).